We begin with the raw amino-acid sequence, 309 residues long: Pyridoxal kinase (309 aa).

Residue T2 is modified to N-acetylthreonine; in Pyridoxal kinase, N-terminally processed. The pyridoxal site is built by S23 and T58. Pyridoxal 5'-phosphate is bound at residue T58. D124 serves as a coordination point for ATP. D124 serves as a coordination point for Na(+). D129 contributes to the Mg(2+) binding site. Residue T155 participates in Na(+) binding. Residues 157–160 (NQFE), 193–194 (TS), 225–227 (IPA), and T232 contribute to the ATP site. T193 contributes to the Na(+) binding site. Position 233–234 (233–234 (GD)) interacts with pyridoxal 5'-phosphate. D234 functions as the Proton acceptor in the catalytic mechanism.

It belongs to the pyridoxine kinase family. Homodimer. Zn(2+) serves as cofactor. In terms of tissue distribution, expressed ubiquitously in leaves, stems, roots, flowers and siliques. Present in root hairs and other tip-growing cells such as papillar cells on the top of stigma.

It carries out the reaction pyridoxal + ATP = pyridoxal 5'-phosphate + ADP + H(+). Its pathway is cofactor metabolism; pyridoxal 5'-phosphate salvage; pyridoxal 5'-phosphate from pyridoxal: step 1/1. Functionally, catalyzes the transfer of a phosphate group from ATP to the 5-hydroxylmethyl group of pyridoxal to form the biologically active pyridoxal phosphate, an active form of vitamin B6. Required for Na(+) and K(+) homeostasis and for salt tolerance. Involved in root hair development, both for initiation and tip growth. The protein is Pyridoxal kinase of Arabidopsis thaliana (Mouse-ear cress).